We begin with the raw amino-acid sequence, 155 residues long: Small ribosomal subunit protein uS7cz/uS7cy (155 aa).

It belongs to the universal ribosomal protein uS7 family. As to quaternary structure, part of the 30S ribosomal subunit.

It is found in the plastid. It localises to the chloroplast. One of the primary rRNA binding proteins, it binds directly to 16S rRNA where it nucleates assembly of the head domain of the 30S subunit. This Vitis vinifera (Grape) protein is Small ribosomal subunit protein uS7cz/uS7cy (rps7-A).